A 248-amino-acid polypeptide reads, in one-letter code: MLIFFELGNSQLKAATILKGNYQFLGSVRHDAILSGEFIESFNLNEQNPTAVYVSSVAPSQLNAALTEVIQQHFKLYPTFLATQPSCCGIECGYEKFDQFGVDRWMAILGACSGSNKPTFIVDAGTALTVDAVIDKKHIGGFIVPGLGLMRDSLLKNTALSEQSLVLQSVQDGLLAKDTAGGVMGGTLYMLGSYLNSLLVDLELETGRKFDCIGTGGDFLSLKPVLDKPYNYVEDLTLRGMKEVIESL.

6–13 is a binding site for ATP; sequence ELGNSQLK. Substrate-binding positions include tyrosine 94 and 101-104; that span reads GVDR. Aspartate 103 serves as the catalytic Proton acceptor. Residue aspartate 123 participates in K(+) binding. Threonine 126 serves as a coordination point for ATP. Residue threonine 179 participates in substrate binding.

This sequence belongs to the type III pantothenate kinase family. In terms of assembly, homodimer. The cofactor is NH4(+). K(+) is required as a cofactor.

The protein resides in the cytoplasm. The catalysed reaction is (R)-pantothenate + ATP = (R)-4'-phosphopantothenate + ADP + H(+). It participates in cofactor biosynthesis; coenzyme A biosynthesis; CoA from (R)-pantothenate: step 1/5. Catalyzes the phosphorylation of pantothenate (Pan), the first step in CoA biosynthesis. The protein is Type III pantothenate kinase of Hydrogenovibrio crunogenus (strain DSM 25203 / XCL-2) (Thiomicrospira crunogena).